Consider the following 104-residue polypeptide: Protein U9 (104 aa).

This is Protein U9 (U9) from Homo sapiens (Human).